Consider the following 362-residue polypeptide: UDP-arabinopyranose mutase 3 (362 aa).

Residues 106–108 (DDD) carry the DXD motif motif. Residue Arg154 is glycosylated (N-linked (Glc...) arginine).

The protein belongs to the RGP family. Heterodimer with RGP1. The cofactor is Mn(2+). It depends on Mg(2+) as a cofactor. Reversibly glycosylated in vitro by UDP-glucose, UDP-xylose and UDP-galactose, but not UDP-mannose. As to expression, specifically expressed in developing seeds.

The protein localises to the cytoplasm. It localises to the cytosol. Its subcellular location is the golgi apparatus. It catalyses the reaction UDP-beta-L-arabinofuranose = UDP-beta-L-arabinopyranose. In terms of biological role, UDP-L-arabinose mutase involved in the biosynthesis of cell wall non-cellulosic polysaccharides. Catalyzes the interconvertion of UDP-L-arabinopyranose (UDP-Arap) and UDP-L-arabinofuranose (UDP-Araf). Preferentially catalyzes the formation of UDP-Arap from UDP-Araf. At thermodynamic equilibrium in vitro the ratio of the pyranose form over the furanose form is 95:5. Is not active on other UDP-sugars (UDP-Gal, UDP-Xyl, UDP-Glc, GDP-Man and GDP-Fuc). Is probably active as heteromer in vivo. The sequence is that of UDP-arabinopyranose mutase 3 from Arabidopsis thaliana (Mouse-ear cress).